A 1043-amino-acid chain; its full sequence is Unconventional myosin-Ia (1043 aa).

Residues 8 to 694 (VGVEDLILLE…TLFYLEEQRR (687 aa)) enclose the Myosin motor domain. 101–108 (GESGAGKT) contacts ATP. An actin-binding region spans residues 571–593 (VAVLMKNLYSKNPNYIRCIKPND). IQ domains are found at residues 697 to 719 (LQQL…HYQQ), 720 to 742 (MRKS…HYGK), and 743 to 772 (IRSS…SGAA). The TH1 domain occupies 858-1042 (KASYPQSVPI…KGSNAMEVTV (185 aa)).

This sequence belongs to the TRAFAC class myosin-kinesin ATPase superfamily. Myosin family. Post-translationally, phosphorylated by ALPK1.

Involved in directing the movement of organelles along actin filaments. In Mus musculus (Mouse), this protein is Unconventional myosin-Ia (Myo1a).